The primary structure comprises 257 residues: RNA polymerase sigma-G factor (257 aa).

Residues 66-79 (DLFQVGCIGLIKSI) carry the Polymerase core binding motif. A DNA-binding region (H-T-H motif) is located at residues 228-247 (QMEVADEIGISQAQVSRLEK).

The protein belongs to the sigma-70 factor family.

Sigma factors are initiation factors that promote the attachment of RNA polymerase to specific initiation sites and are then released. This sigma factor is responsible for the expression of sporulation specific genes. The sequence is that of RNA polymerase sigma-G factor (sigG) from Clostridium acetobutylicum (strain ATCC 824 / DSM 792 / JCM 1419 / IAM 19013 / LMG 5710 / NBRC 13948 / NRRL B-527 / VKM B-1787 / 2291 / W).